Reading from the N-terminus, the 307-residue chain is 3-ketodihydrosphingosine reductase TSC10 (307 aa).

An NADP(+)-binding site is contributed by Leu11. NADPH-binding residues include Gly14, Ser16, and Gly18. A GXSXG motif is present at residues 14-18 (GGSQG). Leu19 is an NADP(+) binding site. Residues Arg40, Lys44, and Leu74 each contribute to the NADPH site. Residue Ser147 is the Proton donor of the active site. NADP(+) contacts are provided by Tyr161, Lys165, and Ser194. Tyr161 (proton acceptor) is an active-site residue. The Lowers pKa of active site Tyr role is filled by Lys165. Residues 261–281 (YFLWPLGWLLGALVNLLVVPI) traverse the membrane as a helical segment.

Belongs to the short-chain dehydrogenases/reductases (SDR) family.

It is found in the endoplasmic reticulum membrane. It catalyses the reaction sphinganine + NADP(+) = 3-oxosphinganine + NADPH + H(+). It participates in lipid metabolism; sphingolipid metabolism. Catalyzes the reduction of 3'-oxosphinganine (3-ketodihydrosphingosine/KDS) to sphinganine (dihydrosphingosine/DHS), the second step of de novo sphingolipid biosynthesis. The chain is 3-ketodihydrosphingosine reductase TSC10 (TSC10) from Eremothecium gossypii (strain ATCC 10895 / CBS 109.51 / FGSC 9923 / NRRL Y-1056) (Yeast).